The following is a 152-amino-acid chain: Allergen Asp f 15 (152 aa).

An N-terminal signal peptide occupies residues 1-19 (MKFTTPISLISLFVSSALA). Intrachain disulfides connect cysteine 53/cysteine 90 and cysteine 93/cysteine 148.

It belongs to the cerato-platanin family.

It is found in the secreted. This is Allergen Asp f 15 from Aspergillus fumigatus (strain ATCC MYA-4609 / CBS 101355 / FGSC A1100 / Af293) (Neosartorya fumigata).